A 186-amino-acid chain; its full sequence is Adenine phosphoribosyltransferase (186 aa).

Belongs to the purine/pyrimidine phosphoribosyltransferase family. As to quaternary structure, homodimer.

It localises to the cytoplasm. The enzyme catalyses AMP + diphosphate = 5-phospho-alpha-D-ribose 1-diphosphate + adenine. The protein operates within purine metabolism; AMP biosynthesis via salvage pathway; AMP from adenine: step 1/1. In terms of biological role, catalyzes a salvage reaction resulting in the formation of AMP, that is energically less costly than de novo synthesis. The polypeptide is Adenine phosphoribosyltransferase (Xanthomonas axonopodis pv. citri (strain 306)).